Consider the following 686-residue polypeptide: UvrABC system protein C (686 aa).

Over residues 1–14 (MVHDSTDDPDDTRV) the composition is skewed to basic and acidic residues. The interval 1–48 (MVHDSTDDPDDTRVRKSRRGTALDAPPQETAPPDLDPATTGGDDEDDA) is disordered. The GIY-YIG domain occupies 81–160 (TSPGVYRMLN…IKQLRPRFNV (80 aa)). In terms of domain architecture, UVR spans 270–305 (HAVKQELAGEMEKAANELEFETAALYRDRLAALSAI).

It belongs to the UvrC family. Interacts with UvrB in an incision complex.

Its subcellular location is the cytoplasm. In terms of biological role, the UvrABC repair system catalyzes the recognition and processing of DNA lesions. UvrC both incises the 5' and 3' sides of the lesion. The N-terminal half is responsible for the 3' incision and the C-terminal half is responsible for the 5' incision. This chain is UvrABC system protein C, found in Bradyrhizobium diazoefficiens (strain JCM 10833 / BCRC 13528 / IAM 13628 / NBRC 14792 / USDA 110).